We begin with the raw amino-acid sequence, 533 residues long: uncharacterized protein (533 aa).

The next 5 membrane-spanning stretches (helical) occupy residues 4–23, 28–47, 57–79, 86–108, and 151–173; these read FLAA…GLAI, VFGL…VVST, IVYQ…PAFF, GWKL…WVLI, and VIGY…AVGA. Positions 263-347 constitute an RCK C-terminal domain; it reads LGEERETKIE…VAEVRRFLGD (85 aa). 4 helical membrane passes run 352 to 374, 379 to 401, 422 to 444, and 454 to 476; these read LADV…GAIP, GGTT…LGAL, LGLA…AALT, and GGLV…VLRL.

Belongs to the AAE transporter (TC 2.A.81) family.

It localises to the cell membrane. This is an uncharacterized protein from Corynebacterium glutamicum (strain ATCC 13032 / DSM 20300 / JCM 1318 / BCRC 11384 / CCUG 27702 / LMG 3730 / NBRC 12168 / NCIMB 10025 / NRRL B-2784 / 534).